Here is a 200-residue protein sequence, read N- to C-terminus: MRTFVLRARAASTHSQTLLANVGGDAHSEILAHTLMNAIFVAQSHRDDVVVHLVLESTQDYSRTITFVAAEMRDIGGFHEQALLAKVVRALDASAGMGKEQMKAVESGITVRTQSFEKVVKELAEDGHQLYMMDPKGENIRELDFAQKPCFLLTDHIPMPKKSFNSLKRLGTEKISLGPTMLFASQCVVLINNELDLAGF.

Residues M133 and C187 each contribute to the S-adenosyl-L-methionine site.

This sequence belongs to the methyltransferase superfamily. TrmY family.

The protein localises to the cytoplasm. The polypeptide is Putative pseudouridine methyltransferase (Alcanivorax borkumensis (strain ATCC 700651 / DSM 11573 / NCIMB 13689 / SK2)).